Here is a 31-residue protein sequence, read N- to C-terminus: Cytochrome b6-f complex subunit 8 (31 aa).

Residues 5 to 25 (IVSLAWAALMVVFTFSLSLVV) form a helical membrane-spanning segment.

Belongs to the PetN family. As to quaternary structure, the 4 large subunits of the cytochrome b6-f complex are cytochrome b6, subunit IV (17 kDa polypeptide, PetD), cytochrome f and the Rieske protein, while the 4 small subunits are PetG, PetL, PetM and PetN. The complex functions as a dimer.

The protein resides in the plastid. It localises to the chloroplast thylakoid membrane. Component of the cytochrome b6-f complex, which mediates electron transfer between photosystem II (PSII) and photosystem I (PSI), cyclic electron flow around PSI, and state transitions. In Acorus calamus (Sweet flag), this protein is Cytochrome b6-f complex subunit 8.